Here is a 778-residue protein sequence, read N- to C-terminus: Melanoma-associated antigen D1 (778 aa).

Disordered stretches follow at residues 41–60 (PTNQ…PTAN), 78–123 (FKVQ…KGPN), and 182–333 (KAWN…PAWQ). A Phosphotyrosine modification is found at Tyr-92. 5 stretches are compositionally biased toward polar residues: residues 104–118 (PNTQ…QNAT), 185–211 (NDTT…SQAD), 225–240 (TAQT…NLES), 253–263 (NNLNVEENSSG), and 300–319 (LAWQ…TPPA). Tandem repeats lie at residues 296-301 (WQTPLA), 302-307 (WQNPSG), 308-313 (WQNQTA), 332-337 (WQNPVA), 338-343 (WQNPVI), 344-349 (WPNPVI), 350-355 (WQNPVI), 356-361 (WPNPIV), 362-367 (WPGPVV), 368-373 (WPNPLA), 374-379 (WQNPPG), 380-385 (WQTPPG), 386-391 (WQTPPG), 392-397 (WQGPPD), 398-403 (WQGPPD), 404-409 (WPLPPD), 410-415 (WPLPPD), 416-421 (WPLPTD), and 422-427 (WPLPPD). The 22 X 6 AA tandem repeats of W-[PQ]-X-P-X-X stretch occupies residues 296 to 444 (WQTPLAWQNP…IPPDWQNLRP (149 aa)). The tract at residues 376–412 (NPPGWQTPPGWQTPPGWQGPPDWQGPPDWPLPPDWPL) is disordered. The span at 377–397 (PPGWQTPPGWQTPPGWQGPPD) shows a compositional bias: low complexity. Positions 398 to 412 (WQGPPDWPLPPDWPL) are enriched in pro residues. The stretch at 428-432 (WIPAD) is one 20; approximate repeat. Repeat copies occupy residues 433 to 438 (WPIPPD) and 439 to 444 (WQNLRP). Over residues 440 to 455 (QNLRPSPNLRPSPNSR) the composition is skewed to low complexity. The interval 440–466 (QNLRPSPNLRPSPNSRASQNPGAAQPR) is disordered. The 199-residue stretch at 471–669 (LQERANKLVK…RDWTAQFMEA (199 aa)) folds into the MAGE domain.

As to quaternary structure, interacts with DLX5, DLX7 and MSX2 and forms homomultimers. Interacts with UNC5A. Interacts with TRIM28 and PJA1. Interacts with NGFR/p75NTR and RORA. As to expression, expressed in bone marrow stromal cells from both multiple myeloma patients and healthy donors. Seems to be ubiquitously expressed.

Its subcellular location is the cytoplasm. The protein resides in the cell membrane. The protein localises to the nucleus. Functionally, involved in the apoptotic response after nerve growth factor (NGF) binding in neuronal cells. Inhibits cell cycle progression, and facilitates NGFR-mediated apoptosis. May act as a regulator of the function of DLX family members. May enhance ubiquitin ligase activity of RING-type zinc finger-containing E3 ubiquitin-protein ligases. Proposed to act through recruitment and/or stabilization of the Ubl-conjugating enzyme (E2) at the E3:substrate complex. Plays a role in the circadian rhythm regulation. May act as RORA co-regulator, modulating the expression of core clock genes such as BMAL1 and NFIL3, induced, or NR1D1, repressed. The polypeptide is Melanoma-associated antigen D1 (MAGED1) (Homo sapiens (Human)).